The following is an 810-amino-acid chain: Phenylalanine--tRNA ligase beta subunit (810 aa).

Residues 39 to 154 (APPTEKIVVG…EGTPVGQDIR (116 aa)) enclose the tRNA-binding domain. The 76-residue stretch at 405–480 (PQRAPVSMRA…RIYGFEKIPA (76 aa)) folds into the B5 domain. Mg(2+) is bound by residues Asp-458, Asp-464, Glu-467, and Glu-468. Positions 707 to 809 (SKFPPVRRDI…MARVYGARLR (103 aa)) constitute an FDX-ACB domain.

The protein belongs to the phenylalanyl-tRNA synthetase beta subunit family. Type 1 subfamily. As to quaternary structure, tetramer of two alpha and two beta subunits. It depends on Mg(2+) as a cofactor.

The protein resides in the cytoplasm. It catalyses the reaction tRNA(Phe) + L-phenylalanine + ATP = L-phenylalanyl-tRNA(Phe) + AMP + diphosphate + H(+). The polypeptide is Phenylalanine--tRNA ligase beta subunit (Burkholderia mallei (strain ATCC 23344)).